The sequence spans 140 residues: Acyl-coenzyme A thioesterase PaaI (140 aa).

As to quaternary structure, homotetramer.

It functions in the pathway aromatic compound metabolism; phenylacetate degradation. In terms of biological role, thioesterase with a preference for ring-hydroxylated phenylacetyl-CoA esters. Hydrolyzes 3,4-dihydroxyphenylacetyl-CoA, 3-hydroxyphenylacetyl-CoA and 4-hydroxyphenylacetyl-CoA. Inactive towards 4-hydroxybenzoyl-CoA and 4-hydroxyphenacyl-CoA. The polypeptide is Acyl-coenzyme A thioesterase PaaI (paaI) (Escherichia coli (strain K12)).